Here is a 218-residue protein sequence, read N- to C-terminus: dTTP/UTP pyrophosphatase (218 aa).

Asp-76 serves as the catalytic Proton acceptor.

The protein belongs to the Maf family. YhdE subfamily. The cofactor is a divalent metal cation.

The protein localises to the cytoplasm. The enzyme catalyses dTTP + H2O = dTMP + diphosphate + H(+). The catalysed reaction is UTP + H2O = UMP + diphosphate + H(+). Functionally, nucleoside triphosphate pyrophosphatase that hydrolyzes dTTP and UTP. May have a dual role in cell division arrest and in preventing the incorporation of modified nucleotides into cellular nucleic acids. This Cytophaga hutchinsonii (strain ATCC 33406 / DSM 1761 / CIP 103989 / NBRC 15051 / NCIMB 9469 / D465) protein is dTTP/UTP pyrophosphatase.